We begin with the raw amino-acid sequence, 147 residues long: D-aminoacyl-tRNA deacylase (147 aa).

A Gly-cisPro motif, important for rejection of L-amino acids motif is present at residues 136 to 137 (GP).

Belongs to the DTD family. Homodimer.

The protein resides in the cytoplasm. The catalysed reaction is glycyl-tRNA(Ala) + H2O = tRNA(Ala) + glycine + H(+). It catalyses the reaction a D-aminoacyl-tRNA + H2O = a tRNA + a D-alpha-amino acid + H(+). An aminoacyl-tRNA editing enzyme that deacylates mischarged D-aminoacyl-tRNAs. Also deacylates mischarged glycyl-tRNA(Ala), protecting cells against glycine mischarging by AlaRS. Acts via tRNA-based rather than protein-based catalysis; rejects L-amino acids rather than detecting D-amino acids in the active site. By recycling D-aminoacyl-tRNA to D-amino acids and free tRNA molecules, this enzyme counteracts the toxicity associated with the formation of D-aminoacyl-tRNA entities in vivo and helps enforce protein L-homochirality. This Streptococcus thermophilus (strain CNRZ 1066) protein is D-aminoacyl-tRNA deacylase.